Here is a 267-residue protein sequence, read N- to C-terminus: Thiamine thiazole synthase (267 aa).

NAD(+) contacts are provided by residues serine 41, 60–61 (ER), glycine 68, valine 132, and 160–162 (HVD). 2 residues coordinate Fe cation: aspartate 162 and histidine 177. Methionine 227 provides a ligand contact to NAD(+). Arginine 237 serves as a coordination point for glycine.

Belongs to the THI4 family. In terms of assembly, homooctamer; tetramer of dimers. Fe(2+) serves as cofactor.

The catalysed reaction is hydrogen sulfide + glycine + NAD(+) = ADP-5-ethyl-4-methylthiazole-2-carboxylate + nicotinamide + 3 H2O + H(+). Its pathway is cofactor biosynthesis; thiamine diphosphate biosynthesis. Its function is as follows. Involved in the biosynthesis of the thiazole moiety of thiamine. Catalyzes the conversion of NAD and glycine to adenosine diphosphate 5-(2-hydroxyethyl)-4-methylthiazole-2-carboxylate (ADT), an adenylated thiazole intermediate, using free sulfide as a source of sulfur. The chain is Thiamine thiazole synthase from Saccharolobus islandicus (strain M.14.25 / Kamchatka #1) (Sulfolobus islandicus).